The following is a 167-amino-acid chain: Photosystem I assembly protein Ycf3 (167 aa).

TPR repeat units lie at residues 35–68 (AFTYYREGMSAQSEGEYAEALQNYYEAMRLEVDA), 72–105 (SYIFYNIGLIHTSNGEHARALEYYYQALERNPSL), and 120–153 (GEQAIENGQAEISKMLFDKAADYWKEAIRLAPTN).

This sequence belongs to the Ycf3 family.

It is found in the plastid. Its subcellular location is the chloroplast thylakoid membrane. Its function is as follows. Essential for the assembly of the photosystem I (PSI) complex. May act as a chaperone-like factor to guide the assembly of the PSI subunits. The protein is Photosystem I assembly protein Ycf3 of Pleurastrum terricola (Filamentous green alga).